Here is a 346-residue protein sequence, read N- to C-terminus: 26S proteasome non-ATPase regulatory subunit 4 (346 aa).

The 186-residue stretch at 5–190 (STMICVDNSE…LTDALLQSSV (186 aa)) folds into the VWFA domain. UIM domains are found at residues 216–235 (ENDPDLALALRVSMEEERAR) and 273–292 (TEEQQLEWALRLSMQENAPA). The interval 290 to 346 (APAEQPQVQHEQMDVDGAPAVGGDNLDDLMNNPELLQQIVDDLPAANAEKDDDKEKK) is disordered. The segment covering 337-346 (AEKDDDKEKK) has biased composition (basic and acidic residues).

This sequence belongs to the proteasome subunit S5A family. As to quaternary structure, the 26S proteasome is composed of a core protease, known as the 20S proteasome, capped at one or both ends by the 19S regulatory complex (RC). The RC is composed of at least 18 different subunits in two subcomplexes, the base and the lid, which form the portions proximal and distal to the 20S proteolytic core, respectively. In terms of tissue distribution, broadly expressed with high expression in the pharynx, intestine, hypodermis and spermatheca and weak expression in the excretory cell, body wall muscle, vulva and somatic gonad.

Its subcellular location is the cytoplasm. It localises to the nucleus. In terms of biological role, binds and presumably selects ubiquitin-conjugates for destruction. Required for protein degradation and ubiquitin-proteasome system (UBS) function and regulates proteasomal subunit expression. Involvement in UBS might be cell type specific. Regulator of the autophagy-lysosome pathway that may confer resistance to autophagy by regulating the expression of autophagy-related proteins such as lgg-1, and by regulating lysosome formation, possibly by modulating elt-2 activity. Required for fertility, sperm production, and sex determination through regulation of tra-2 protein. Plays a role in the elimination of paternal mitochondria in fertilized eggs. The polypeptide is 26S proteasome non-ATPase regulatory subunit 4 (Caenorhabditis elegans).